The chain runs to 256 residues: Pimeloyl-[acyl-carrier protein] methyl ester esterase (256 aa).

In terms of domain architecture, AB hydrolase-1 spans 15-242; sequence HLVLLHGWGL…AAHAPFISHP (228 aa). Substrate contacts are provided by residues W22, 82 to 83, and 143 to 147; these read SL and FLALQ. Catalysis depends on S82, which acts as the Nucleophile. Active-site residues include D207 and H235. H235 serves as a coordination point for substrate.

The protein belongs to the AB hydrolase superfamily. Carboxylesterase BioH family. In terms of assembly, monomer.

It localises to the cytoplasm. The catalysed reaction is 6-carboxyhexanoyl-[ACP] methyl ester + H2O = 6-carboxyhexanoyl-[ACP] + methanol + H(+). Its pathway is cofactor biosynthesis; biotin biosynthesis. The physiological role of BioH is to remove the methyl group introduced by BioC when the pimeloyl moiety is complete. It allows to synthesize pimeloyl-ACP via the fatty acid synthetic pathway through the hydrolysis of the ester bonds of pimeloyl-ACP esters. In Shigella boydii serotype 18 (strain CDC 3083-94 / BS512), this protein is Pimeloyl-[acyl-carrier protein] methyl ester esterase.